Reading from the N-terminus, the 220-residue chain is MELYLDTSDVVAVTALSRIFPLAGVTTNPSIIAAGKKPLEVVLPQLHEAMGGQGRLFAQVMATTAEGMVNDARKLRSIIADIVVKVPVTAEGLAAIKMLKAEGIPTLGTAVYGAAQGLLSALAGAEYVAPYVNRIDAQGGSGIQTVTDLHQLLKMHAPQAKVLAASFKTPRQALDCLLAGCESITLPLDVAQQMISYPAVDAAVAKFEQDWLGAFGRTSI.

The active-site Schiff-base intermediate with substrate is Lys-85.

This sequence belongs to the transaldolase family. Type 3A subfamily. As to quaternary structure, homodecamer.

It is found in the cytoplasm. It carries out the reaction beta-D-fructose 6-phosphate = dihydroxyacetone + D-glyceraldehyde 3-phosphate. Functionally, catalyzes the reversible formation of fructose 6-phosphate from dihydroxyacetone and D-glyceraldehyde 3-phosphate via an aldolization reaction. This chain is Fructose-6-phosphate aldolase 1 (fsaA), found in Escherichia coli O6:H1 (strain CFT073 / ATCC 700928 / UPEC).